We begin with the raw amino-acid sequence, 245 residues long: Haloacid dehalogenase-like hydrolase domain-containing protein At2g33255 (245 aa).

The residue at position 2 (T2) is an N-acetylalanine. The Nucleophile role is filled by D39. Residues D39, D41, and D186 each coordinate Mg(2+). D41 acts as the Proton donor in catalysis.

Belongs to the HAD-like hydrolase superfamily. DOG/GPP family. Mg(2+) is required as a cofactor.

The sequence is that of Haloacid dehalogenase-like hydrolase domain-containing protein At2g33255 from Arabidopsis thaliana (Mouse-ear cress).